A 208-amino-acid chain; its full sequence is Proheparin-binding EGF-like growth factor (208 aa).

Positions Met1–Gly23 are cleaved as a signal peptide. The propeptide occupies Glu24–Gln62. Topologically, residues Glu24–Thr160 are extracellular. Residues Ala82–Lys103 form a disordered region. A glycan (O-linked (GalNAc...) threonine) is linked at Thr85. Residues Asn91–Gly102 are compositionally biased toward basic residues. Residues Lys104 to His144 enclose the EGF-like domain. 3 disulfide bridges follow: Cys108–Cys121, Cys116–Cys132, and Cys134–Cys143. A propeptide spans Pro149–His208 (C-terminal). The chain crosses the membrane as a helical span at residues Thr161–Phe184. The Cytoplasmic portion of the chain corresponds to Arg185–His208.

Interacts with FBLN1. Interacts with EGFR and ERBB4. O-glycosylated. Most abundant in skeletal muscle, lung, spleen brain and heart.

The protein localises to the secreted. It localises to the extracellular space. The protein resides in the cell membrane. Its function is as follows. Growth factor that mediates its effects via EGFR, ERBB2 and ERBB4. Required for normal cardiac valve formation and normal heart function. Promotes smooth muscle cell proliferation. May be involved in macrophage-mediated cellular proliferation. It is mitogenic for fibroblasts, but not endothelial cells. It is able to bind EGF receptor/EGFR with higher affinity than EGF itself and is a far more potent mitogen for smooth muscle cells than EGF. Also acts as a diphtheria toxin receptor. The chain is Proheparin-binding EGF-like growth factor (Hbegf) from Rattus norvegicus (Rat).